A 415-amino-acid chain; its full sequence is tRNA(Met) cytidine acetate ligase (415 aa).

Residues 7 to 20 (VVEY…HLYH), glycine 101, asparagine 162, and 187 to 188 (RI) each bind ATP.

The protein belongs to the TmcAL family. As to quaternary structure, homodimer.

It is found in the cytoplasm. The enzyme catalyses cytidine(34) in elongator tRNA(Met) + acetate + ATP = N(4)-acetylcytidine(34) in elongator tRNA(Met) + AMP + diphosphate. Its function is as follows. Catalyzes the formation of N(4)-acetylcytidine (ac(4)C) at the wobble position of elongator tRNA(Met), using acetate and ATP as substrates. First activates an acetate ion to form acetyladenylate (Ac-AMP) and then transfers the acetyl group to tRNA to form ac(4)C34. In Bacillus subtilis (strain 168), this protein is tRNA(Met) cytidine acetate ligase.